A 250-amino-acid polypeptide reads, in one-letter code: Sperm-egg fusion protein Juno (250 aa).

The first 19 residues, 1-19, serve as a signal peptide directing secretion; it reads MACWWPLLLELWTVMPTWA. 8 cysteine pairs are disulfide-bonded: Cys27/Cys55, Cys47/Cys95, Cys56/Cys99, Cys79/Cys172, Cys86/Cys143, Cys132/Cys206, Cys136/Cys186, and Cys149/Cys166. The interval 62–81 is important for interaction with IZUMO1; the sequence is WEAHLDVSPLYNFSLFHCGL. Residue Asn73 is glycosylated (N-linked (GlcNAc...) asparagine). Ser228 carries the GPI-anchor amidated serine lipid modification. The propeptide occupies 229-250; that stretch reads SAPSWELSYTIMVCSLFLPFLS.

Belongs to the folate receptor family. As to quaternary structure, monomer. Interacts with IZUMO1; the interaction is direct. IZUMO1 and IZUMO1R/JUNO form a complex with 1:1 stoichiometry. Interacts with FCRL3/MAIA; FCRL3/MAIA replaces IZUMO1R/JUNO as IZUMO1 receptor after sperm-egg adhesion, thereby permitting species-specific gamete fusion. Interacts with WDR54. Post-translationally, the protein is rapidly cleaved following fertilization, being only weakly detectable in zona-intact fertilized eggs at telophase II and undetectable at the pronuclear stage. Sheding is probably required to block to polyspermy and ensuring egg fusion with a single sperm. In terms of tissue distribution, expressed in unfertilized oocytes (at protein level).

The protein localises to the cell membrane. Its subcellular location is the cell projection. The protein resides in the microvillus membrane. Functionally, receptor for IZUMO1 present at the cell surface of oocytes (oolemma), which is essential for species-specific gamete recognition and fertilization. The IZUMO1:IZUMO1R/JUNO interaction is a necessary adhesion event between sperm and egg that is required for fertilization but is not sufficient for cell fusion. The ligand-receptor interaction probably does not act as a membrane 'fusogen'. Does not bind folate. The sequence is that of Sperm-egg fusion protein Juno from Homo sapiens (Human).